A 643-amino-acid polypeptide reads, in one-letter code: Lysophospholipase ARB_05919 (643 aa).

The N-terminal stretch at 1-22 (MMFIPATLGTFVLASLLPATVG) is a signal peptide. Residues 50 to 597 (DCPSTKPAVR…KMYCWDGTLN (548 aa)) form the PLA2c domain. Asparagine 142, asparagine 176, asparagine 195, asparagine 293, asparagine 466, asparagine 472, asparagine 482, asparagine 503, asparagine 524, asparagine 533, asparagine 552, and asparagine 597 each carry an N-linked (GlcNAc...) asparagine glycan.

The protein belongs to the lysophospholipase family.

Its subcellular location is the secreted. It catalyses the reaction a 1-acyl-sn-glycero-3-phosphocholine + H2O = sn-glycerol 3-phosphocholine + a fatty acid + H(+). Functionally, catalyzes the release of fatty acids from lysophospholipids. Phospholipase B may well contribute to pathogenicity by abetting the fungus in damaging host cell membranes. The protein is Lysophospholipase ARB_05919 of Arthroderma benhamiae (strain ATCC MYA-4681 / CBS 112371) (Trichophyton mentagrophytes).